A 365-amino-acid polypeptide reads, in one-letter code: Phospho-N-acetylmuramoyl-pentapeptide-transferase (365 aa).

10 helical membrane passes run 15-35, 51-71, 96-116, 121-141, 156-176, 180-200, 217-237, 238-258, 279-299, and 344-364; these read PSGTQLLGLLSVLLVGLAVLI, VPVLVSAIVAGIFGMWIVPLL, TMGGLIFLPVGLAAGVIFAGF, IAVALVTLAYGVIGWVDDWQV, LILQIAIAVVFCIWLALTAPE, ITFFAGLSLPLGVFFWALAGF, GLAGGTGAIAFLGVGALALPA, HPGLSLLCACLSGACLGFIYH, LAAAGILSGNIWGLLIISGIF, and TQIVGAFYLINLGLVLLSFIL.

It belongs to the glycosyltransferase 4 family. MraY subfamily. Requires Mg(2+) as cofactor.

The protein localises to the cell inner membrane. It carries out the reaction UDP-N-acetyl-alpha-D-muramoyl-L-alanyl-gamma-D-glutamyl-meso-2,6-diaminopimeloyl-D-alanyl-D-alanine + di-trans,octa-cis-undecaprenyl phosphate = di-trans,octa-cis-undecaprenyl diphospho-N-acetyl-alpha-D-muramoyl-L-alanyl-D-glutamyl-meso-2,6-diaminopimeloyl-D-alanyl-D-alanine + UMP. It functions in the pathway cell wall biogenesis; peptidoglycan biosynthesis. Catalyzes the initial step of the lipid cycle reactions in the biosynthesis of the cell wall peptidoglycan: transfers peptidoglycan precursor phospho-MurNAc-pentapeptide from UDP-MurNAc-pentapeptide onto the lipid carrier undecaprenyl phosphate, yielding undecaprenyl-pyrophosphoryl-MurNAc-pentapeptide, known as lipid I. The chain is Phospho-N-acetylmuramoyl-pentapeptide-transferase from Picosynechococcus sp. (strain ATCC 27264 / PCC 7002 / PR-6) (Agmenellum quadruplicatum).